Reading from the N-terminus, the 237-residue chain is uncharacterized protein (237 aa).

7 helical membrane-spanning segments follow: residues 19–39, 51–71, 81–101, 106–126, 136–156, 159–179, and 209–229; these read ILNG…GLAW, YDSP…YGLS, IAGV…ASLV, IIIV…AGLL, FIIM…AALM, RPIW…ISHG, and LYYY…TLVW.

The protein localises to the cell membrane. This is an uncharacterized protein from Escherichia coli (strain K12).